The following is a 248-amino-acid chain: Ubiquinone/menaquinone biosynthesis C-methyltransferase UbiE (248 aa).

Residues S68, D92, and 120 to 121 (NA) each bind S-adenosyl-L-methionine.

It belongs to the class I-like SAM-binding methyltransferase superfamily. MenG/UbiE family.

It catalyses the reaction a 2-demethylmenaquinol + S-adenosyl-L-methionine = a menaquinol + S-adenosyl-L-homocysteine + H(+). The catalysed reaction is a 2-methoxy-6-(all-trans-polyprenyl)benzene-1,4-diol + S-adenosyl-L-methionine = a 5-methoxy-2-methyl-3-(all-trans-polyprenyl)benzene-1,4-diol + S-adenosyl-L-homocysteine + H(+). It functions in the pathway quinol/quinone metabolism; menaquinone biosynthesis; menaquinol from 1,4-dihydroxy-2-naphthoate: step 2/2. The protein operates within cofactor biosynthesis; ubiquinone biosynthesis. Methyltransferase required for the conversion of demethylmenaquinol (DMKH2) to menaquinol (MKH2) and the conversion of 2-polyprenyl-6-methoxy-1,4-benzoquinol (DDMQH2) to 2-polyprenyl-3-methyl-6-methoxy-1,4-benzoquinol (DMQH2). In Rickettsia typhi (strain ATCC VR-144 / Wilmington), this protein is Ubiquinone/menaquinone biosynthesis C-methyltransferase UbiE.